Consider the following 117-residue polypeptide: MDKKTARLRRAAKTRHKIHELGVVRLTVHRTPKHIYVQIIKPADGNVVASASTVESMLKQQLKNTGNKEAAITVGKTIAERAKAKGIAKVAFDRSGYKYHGRVKALADAAREGGLQF.

It belongs to the universal ribosomal protein uL18 family. As to quaternary structure, part of the 50S ribosomal subunit; part of the 5S rRNA/L5/L18/L25 subcomplex. Contacts the 5S and 23S rRNAs.

Functionally, this is one of the proteins that bind and probably mediate the attachment of the 5S RNA into the large ribosomal subunit, where it forms part of the central protuberance. The chain is Large ribosomal subunit protein uL18 from Nitrosococcus oceani (strain ATCC 19707 / BCRC 17464 / JCM 30415 / NCIMB 11848 / C-107).